A 242-amino-acid chain; its full sequence is Probable transcriptional regulatory protein BTH_I1015 (242 aa).

It belongs to the TACO1 family.

It localises to the cytoplasm. The sequence is that of Probable transcriptional regulatory protein BTH_I1015 from Burkholderia thailandensis (strain ATCC 700388 / DSM 13276 / CCUG 48851 / CIP 106301 / E264).